A 327-amino-acid chain; its full sequence is 4-hydroxy-2-oxoglutarate aldolase, mitochondrial (327 aa).

A mitochondrion-targeting transit peptide spans 1–25 (MLVPRVWSSVRLGLSRVLSRTLRGW). Substrate is bound at residue 77–78 (SN). The Schiff-base intermediate with substrate role is filled by K196. Substrate is bound by residues S198 and G222.

This sequence belongs to the DapA family. In terms of assembly, homotetramer.

The protein localises to the mitochondrion. The enzyme catalyses (4S)-4-hydroxy-2-oxoglutarate = glyoxylate + pyruvate. It catalyses the reaction (4R)-4-hydroxy-2-oxoglutarate = glyoxylate + pyruvate. With respect to regulation, inhibited by divalent cations. Its function is as follows. Catalyzes the final step in the metabolic pathway of hydroxyproline. In Bos taurus (Bovine), this protein is 4-hydroxy-2-oxoglutarate aldolase, mitochondrial (HOGA1).